Here is a 353-residue protein sequence, read N- to C-terminus: Nuclear hormone receptor family member nhr-27 (353 aa).

Positions 24–102 (VSNCVVCGRL…KGMLDLSRYT (79 aa)) form a DNA-binding region, nuclear receptor. 2 consecutive NR C4-type zinc fingers follow at residues 27–47 (CVVC…CSAC) and 64–85 (CKYS…CKFC). The NR LBD domain maps to 119 to 351 (ETLFLTMTVS…SQVHQDVIEF (233 aa)). The tract at residues 340-351 (QPSQVHQDVIEF) is AF-2.

Belongs to the nuclear hormone receptor family.

It localises to the nucleus. In terms of biological role, ligand-activated transcription factor. Involved in lifespan extension in a manner dependent upon mitochondrial function. The chain is Nuclear hormone receptor family member nhr-27 from Caenorhabditis elegans.